We begin with the raw amino-acid sequence, 527 residues long: Putative zinc finger CCCH domain-containing protein 64 (527 aa).

Residues 103 to 127 (GQLRSTQTTSKRKAASRKGQREQRV) are disordered. The C3H1-type zinc-finger motif lies at 213–241 (RPGEPFCRYYMKFGECKHMTFCKYNHPKD).

This chain is Putative zinc finger CCCH domain-containing protein 64, found in Oryza sativa subsp. japonica (Rice).